Reading from the N-terminus, the 414-residue chain is Ribulose bisphosphate carboxylase large chain (414 aa).

The substrate site is built by Asn-100 and Thr-150. Residue Lys-152 is the Proton acceptor of the active site. A substrate-binding site is contributed by Lys-154. Mg(2+)-binding residues include Lys-178, Asp-180, and Glu-181. N6-carboxylysine is present on Lys-178. His-271 (proton acceptor) is an active-site residue. 3 residues coordinate substrate: Arg-272, His-304, and Ser-356.

It belongs to the RuBisCO large chain family. Type I subfamily. Heterohexadecamer of 8 large chains and 8 small chains; disulfide-linked. The disulfide link is formed within the large subunit homodimers. Requires Mg(2+) as cofactor. The disulfide bond which can form in the large chain dimeric partners within the hexadecamer appears to be associated with oxidative stress and protein turnover.

Its subcellular location is the plastid. The protein resides in the chloroplast. It carries out the reaction 2 (2R)-3-phosphoglycerate + 2 H(+) = D-ribulose 1,5-bisphosphate + CO2 + H2O. The enzyme catalyses D-ribulose 1,5-bisphosphate + O2 = 2-phosphoglycolate + (2R)-3-phosphoglycerate + 2 H(+). Functionally, ruBisCO catalyzes two reactions: the carboxylation of D-ribulose 1,5-bisphosphate, the primary event in carbon dioxide fixation, as well as the oxidative fragmentation of the pentose substrate in the photorespiration process. Both reactions occur simultaneously and in competition at the same active site. This chain is Ribulose bisphosphate carboxylase large chain (rbcL), found in Blechnopsis orientalis (Fish fern).